The chain runs to 200 residues: Ras-related protein RABF2a (200 aa).

17–25 (GDVGAGKSS) is a GTP binding site. The Effector region signature appears at 39 to 47 (QESTIGAAF). GTP-binding positions include 65–69 (DTAGQ), 123–126 (NKAD), and 153–154 (SA). S-geranylgeranyl cysteine attachment occurs at residues C198 and C199.

It belongs to the small GTPase superfamily. Rab family. As to quaternary structure, interacts with VPS9A. Interacts with EREX (via PX domain). Binds to VPS3. In terms of tissue distribution, high in stem, root, and inflorescence.

Its subcellular location is the endosome membrane. It is found in the prevacuolar compartment membrane. Its function is as follows. Involved in the trafficking of soluble cargo proteins from the prevacuolar compartment to the central vacuole. Involved in vacuolar transport of storage proteins with EREX as effector. Regulates membrane trafficking to protein storage vacuoles (PSVs). This is Ras-related protein RABF2a (RABF2A) from Arabidopsis thaliana (Mouse-ear cress).